The following is a 106-amino-acid chain: Oncosphere antigen B (106 aa).

The region spanning 11–106 (LPQHFRWSQV…QSELRSMCIK (96 aa)) is the Fibronectin type-III domain.

The sequence is that of Oncosphere antigen B (ONCB) from Hydatigena taeniaeformis (Feline tapeworm).